We begin with the raw amino-acid sequence, 673 residues long: uncharacterized protein (673 aa).

The signal sequence occupies residues 1 to 24 (MKIHNIIKIIIVVCLEGFALTSFA). 6 helical membrane-spanning segments follow: residues 224–244 (NAIG…MVLN), 253–273 (IALF…LGPL), 410–430 (IILI…LYFI), 436–456 (CMIT…MMLF), 469–489 (VSLS…LLIT), and 562–582 (VVSI…FYYF). Positions 624–673 (AQATQGKPPSSGDMPGDGGSKRSEGQKGDDSFISSGGNSSGDSLSSSGGK) are disordered. Basic and acidic residues predominate over residues 642 to 653 (GSKRSEGQKGDD). Over residues 654 to 673 (SFISSGGNSSGDSLSSSGGK) the composition is skewed to low complexity.

The protein belongs to the TrbL/VirB6 family.

The protein localises to the cell membrane. This is an uncharacterized protein from Rickettsia bellii (strain RML369-C).